The chain runs to 643 residues: MSRPSTPLLDKAPTPDRLRALPEQDLPQLAEELRTELIDAVSTTGGHLGAGLGVVELTVALHHVFNTPYDRIIWDVGHQAYPHKILTGRRDRIRTLRQAGGLSGFTKRAESEYDPFGAAHSSTSISAGLGMAVASELSGEKRNVIAVIGDGSMSAGMAYEAMNNAGALDARLIVILNDNDMSIAPPTGAMSAYLARLVSGRTYRSVREAAKQVAQKLPKFLQDKARKSEEYARAFFTGGTLFEELGFYYVGPIDGHNLDHLLPVLKNVRDTQKGPVLIHVVTQKGKGYAPAEAAADKYHGVNKFDVITGKQAKPPANAPSYTKIFGTSLIEEARHDDKIVAVTAAMPTGTGLDLFGEAFPKRVFDVGIAEQHAVTFAAGLASEGYKPFCAIYSTFLQRGYDQVVHDVSIQNLPVRFPIDRAGLVGADGPTHAGSFDTGFLAALPGFVVMAASDEAELRHMVRTAAEYDEGPISFRYPRGDGVGVDLPERGSVLEIGKGRIVREGTKVALLSFGTRLQECLAAAEELGAAGLSTTVADARFAKPLDHDLIRRLAREHEVLVMVEEGAVGGFSSHVLQFLATDGLLDRGLKVRALMLPDIYQDHGKPDAMYAEAGLDRTGIVRTVFAALHRDELGHEALPTPFRA.

Thiamine diphosphate-binding positions include His-78 and Ala-119 to Ser-121. Position 150 (Asp-150) interacts with Mg(2+). Residues Gly-151 to Ser-152, Asn-179, Tyr-288, and Glu-370 contribute to the thiamine diphosphate site. Asn-179 contributes to the Mg(2+) binding site.

The protein belongs to the transketolase family. DXPS subfamily. As to quaternary structure, homodimer. Mg(2+) serves as cofactor. Thiamine diphosphate is required as a cofactor.

It catalyses the reaction D-glyceraldehyde 3-phosphate + pyruvate + H(+) = 1-deoxy-D-xylulose 5-phosphate + CO2. The protein operates within metabolic intermediate biosynthesis; 1-deoxy-D-xylulose 5-phosphate biosynthesis; 1-deoxy-D-xylulose 5-phosphate from D-glyceraldehyde 3-phosphate and pyruvate: step 1/1. Functionally, catalyzes the acyloin condensation reaction between C atoms 2 and 3 of pyruvate and glyceraldehyde 3-phosphate to yield 1-deoxy-D-xylulose-5-phosphate (DXP). The polypeptide is 1-deoxy-D-xylulose-5-phosphate synthase (Brucella abortus (strain S19)).